Reading from the N-terminus, the 357-residue chain is S-adenosylmethionine:tRNA ribosyltransferase-isomerase (357 aa).

The protein belongs to the QueA family. Monomer.

It is found in the cytoplasm. The enzyme catalyses 7-aminomethyl-7-carbaguanosine(34) in tRNA + S-adenosyl-L-methionine = epoxyqueuosine(34) in tRNA + adenine + L-methionine + 2 H(+). Its pathway is tRNA modification; tRNA-queuosine biosynthesis. Transfers and isomerizes the ribose moiety from AdoMet to the 7-aminomethyl group of 7-deazaguanine (preQ1-tRNA) to give epoxyqueuosine (oQ-tRNA). The polypeptide is S-adenosylmethionine:tRNA ribosyltransferase-isomerase (Proteus mirabilis (strain HI4320)).